The primary structure comprises 533 residues: Acetone monooxygenase (methyl acetate-forming) (533 aa).

Residues 43 to 46 (TWYW), 55 to 56 (DS), and tyrosine 61 each bind FAD. 53–55 (RFD) contributes to the NADP(+) binding site. NADP(+) is bound by residues 183 to 189 (NGATGIQ), 206 to 207 (RT), and tryptophan 492.

It belongs to the FAD-binding monooxygenase family. In terms of assembly, homotetramer. FAD serves as cofactor.

The enzyme catalyses acetone + NADPH + O2 + H(+) = methyl acetate + NADP(+) + H2O. Functionally, plays an important role in the metabolism of acetone derived from propane oxidation. Catalyzes the oxidation of acetone to methyl acetate. Exhibits high catalytic efficiency towards various linear and cyclic ketones, such as butanone, 2-pentanone, 2-heptanone, 2-octanone, 2-nonanone, 2-decanone, cyclobutanone, cyclopentanone and cyclohexanone. Elicits the highest catalytic efficiency towards butanone and cyclobutanone. Is highly specific for NADPH and cannot use NADH. This Gordonia sp. (strain TY-5) protein is Acetone monooxygenase (methyl acetate-forming).